Here is a 172-residue protein sequence, read N- to C-terminus: MVNLILVGPMGAGKSTIGRLLAKELHLAFKDSDKEIEQRCGANIPWIFDVEGEAGFREREQAMLSELCATDGMVIATGGGAVMRDGNRQILRAGGRVVYLHASVEHQIARTARDRNRPLLQKPNPGQILRDLMDLRDPLYREIADVVVETDERPPRLVVQEILERLRKLPPR.

11–16 (GAGKST) serves as a coordination point for ATP. Ser-15 serves as a coordination point for Mg(2+). Residues Asp-33, Arg-57, and Gly-79 each contribute to the substrate site. Arg-117 serves as a coordination point for ATP. Substrate is bound at residue Arg-136. Arg-153 serves as a coordination point for ATP.

Belongs to the shikimate kinase family. In terms of assembly, monomer. Requires Mg(2+) as cofactor.

Its subcellular location is the cytoplasm. The enzyme catalyses shikimate + ATP = 3-phosphoshikimate + ADP + H(+). It functions in the pathway metabolic intermediate biosynthesis; chorismate biosynthesis; chorismate from D-erythrose 4-phosphate and phosphoenolpyruvate: step 5/7. Catalyzes the specific phosphorylation of the 3-hydroxyl group of shikimic acid using ATP as a cosubstrate. In Pseudomonas paraeruginosa (strain DSM 24068 / PA7) (Pseudomonas aeruginosa (strain PA7)), this protein is Shikimate kinase.